We begin with the raw amino-acid sequence, 33 residues long: Beta-theraphotoxin-Cm1b (33 aa).

Disulfide bonds link Cys2–Cys17, Cys9–Cys22, and Cys16–Cys29. Leu33 bears the Leucine amide mark.

This sequence belongs to the neurotoxin 10 (Hwtx-1) family. 04 (CcoTx1) subfamily. As to expression, expressed by the venom gland.

The protein localises to the secreted. Its function is as follows. Inhibits several voltage-gated sodium channels and only one voltage-gated calcium channel (Cav2.2/CACNA1B (IC(50)=1.1 uM) and Nav1.2/SCN2A (IC(50)=3.7-80 nM), Nav1.3/SCN3A (IC(50)=88-5570 nM), Nav1.1/SCN1A (IC(50)=170-407 nM), Nav1.7/SCN9A (IC(50)=95.5-230 nM), Nav1.6/SCN6A (IC(50)=49.9-3990 nM), Nav1.4/SCN4A (IC(50)=113-400 nM or &gt;10 uM), Nav1.5/SCN5A (IC(50)=1524-1634 nM or &gt;10 uM)). The toxin acts by shifting the voltage dependence of channel activation to more depolarized potentials and by blocking the inward component of the sodium current. It shows moderate affinity for lipid bilayers without cholesterol and high affinity for lipid bilayers containing cholesterol. In vivo, this toxin causes general ataxia, lack of response to stimuli, and semiparalysis. After a few minutes, the mice are unable to stand, and breathing is reduced in rhythm and intensity. Symptoms gradually increase with progressive slowing of breathing and flaccid paralysis; death occurred within 10 to 20 minutes post injection. Animals remain totally flaccid, and no symptoms of excitatory neurotoxicity are observed. The polypeptide is Beta-theraphotoxin-Cm1b (Ceratogyrus marshalli (Straighthorned baboon tarantula)).